The chain runs to 122 residues: Large ribosomal subunit protein uL18 (122 aa).

Belongs to the universal ribosomal protein uL18 family. As to quaternary structure, part of the 50S ribosomal subunit; part of the 5S rRNA/L5/L18/L25 subcomplex. Contacts the 5S and 23S rRNAs.

Functionally, this is one of the proteins that bind and probably mediate the attachment of the 5S RNA into the large ribosomal subunit, where it forms part of the central protuberance. This chain is Large ribosomal subunit protein uL18, found in Leptospira borgpetersenii serovar Hardjo-bovis (strain JB197).